Reading from the N-terminus, the 707-residue chain is Anaerobic ribonucleoside-triphosphate reductase (707 aa).

In terms of domain architecture, ATP-cone spans 4-95; sequence FGVIKRDGSR…EYRHDRDLAR (92 aa). Residues 584 to 707 enclose the Glycine radical domain; sequence KKVNPYDKLD…EEVKRRVKHL (124 aa). 4 residues coordinate Zn(2+): Cys645, Cys648, Cys663, and Cys666. Residue Gly682 is modified to Glycine radical.

Belongs to the anaerobic ribonucleoside-triphosphate reductase family. Forms a tetramer composed of two NrdD and two NrdG subunits.

It catalyses the reaction a ribonucleoside 5'-triphosphate + formate + H(+) = a 2'-deoxyribonucleoside 5'-triphosphate + CO2 + H2O. Its activity is regulated as follows. Activated under anaerobic conditions by NrdG, a tightly associated activase. Activation involves the formation of a glycyl radical at Gly-682. In terms of biological role, catalyzes the conversion of ribonucleotides into deoxyribonucleotides, which are required for DNA synthesis and repair. This Haemophilus influenzae (strain ATCC 51907 / DSM 11121 / KW20 / Rd) protein is Anaerobic ribonucleoside-triphosphate reductase (nrdD).